Here is a 357-residue protein sequence, read N- to C-terminus: NAD-dependent protein deacetylase HST2 (357 aa).

Serine 2 carries the N-acetylserine modification. Positions 5–284 constitute a Deacetylase sirtuin-type domain; sequence TASTEMSVRK…EQLVEELGWQ (280 aa). NAD(+) is bound by residues 32-52 and 115-118; these read GAGI…TGLY and QNID. Histidine 135 serves as the catalytic Proton acceptor. Zn(2+) contacts are provided by cysteine 143, cysteine 146, cysteine 170, and cysteine 173. Residues 223–225, 248–250, and serine 270 contribute to the NAD(+) site; these read GTS and NLE. Basic and acidic residues predominate over residues 317–329; sequence LDQSEHESADKKD. Residues 317–357 are disordered; the sequence is LDQSEHESADKKDKKLQRLNGHDSDEDGASNSSSSQKAAKE. Residue serine 340 is modified to Phosphoserine.

This sequence belongs to the sirtuin family. Class I subfamily. In terms of assembly, homotrimer. Monomer. Homotrimeric in its unliganded state. Undergoes a trimer-monomer transition upon acetyl-lysine substrate binding. The cofactor is Zn(2+).

The protein resides in the cytoplasm. Its subcellular location is the nucleus. The enzyme catalyses N(6)-acetyl-L-lysyl-[protein] + NAD(+) + H2O = 2''-O-acetyl-ADP-D-ribose + nicotinamide + L-lysyl-[protein]. Its activity is regulated as follows. Inhibited by ADP-ribose and nicotinamide. Its function is as follows. NAD-dependent histone deacetylase that is involved in nuclear silencing events. Derepresses subtelomeric silencing and increases repression in nucleolar (rDNA) silencing. Its function is negatively regulated by active nuclear export. The protein is NAD-dependent protein deacetylase HST2 (HST2) of Saccharomyces cerevisiae (strain ATCC 204508 / S288c) (Baker's yeast).